The sequence spans 138 residues: MFRSRVSGVFQQVRFQSTAASKAASKAQGLGAKVQGITNCAVYWAKVTGELGKQIYLKEGFAPPSLSQFQSVYQNLFNSVKSYALKPQKVIDCAESITKTDALRYTAYGVQILGLFTLGEVIGRRNVIGYKVPSADKH.

The protein belongs to the ATPase g subunit family. As to quaternary structure, F-type ATP synthases have 2 components, the catalytic core F(1) and the membrane-embedded component F(0), linked together by a central stalk and a peripheral stalk. The central stalk, also called rotor shaft, is often seen as part of F(1). The peripheral stalk is seen as part of F(0). F(0) contains the membrane channel next to the rotor. F-type ATP synthases form dimers but each monomer functions independently in ATP generation. The dimer consists of 17 different polypeptides: ATP1 (subunit alpha, 3 molecules per monomer, part of F(1)), ATP2 (subunit beta, 3 copies per monomer, part of F(1)), ATP3 (subunit gamma, part of the central stalk), ATP4 (subunit b, part of the peripheral stalk), ATP5/OSCP (subunit 5/OSCP, part of the peripheral stalk), ATP6 (subunit a, part of the peripheral stalk), ATP7 (subunit d, part of the peripheral stalk), ATP8 (subunit 8, part of the peripheral stalk), OLI1 (subunit c, part of the rotor, 10 molecules per monomer), ATP14 (subunit h, part of the peripheral stalk), ATP15 (subunit epsilon, part of the central stalk), ATP16 (subunit delta, part of the central stalk), ATP17 (subunit f, part of the peripheral stalk), ATP18 (subunit i/j, part of the peripheral stalk), ATP19 (subunit k, dimer-specific, at interface between monomers), ATP20 (subunit g, at interface between monomers), TIM11 (subunit e, at interface between monomers).

Its subcellular location is the mitochondrion inner membrane. In terms of biological role, mitochondrial membrane ATP synthase (F(1)F(0) ATP synthase or Complex V) produces ATP from ADP in the presence of a proton gradient across the membrane which is generated by electron transport complexes of the respiratory chain. F-type ATP synthases consist of two structural domains, F(1) - containing the extramembraneous catalytic core, and F(0) - containing the membrane proton channel, linked together by a central stalk and a peripheral stalk. During catalysis, ATP synthesis in the catalytic domain of F(1) is coupled via a rotary mechanism of the central stalk subunits to proton translocation. Part of the complex F(0) domain. Minor subunit located with subunit a/ATP6 in the membrane. Together with subunit e/TIM11, probably contributes to membrane curvature at the site of the ATP synthase dimer, ultimately contributing to formation of cristae. The chain is ATP synthase subunit g, mitochondrial from Yarrowia lipolytica (strain CLIB 122 / E 150) (Yeast).